We begin with the raw amino-acid sequence, 378 residues long: Protein FAM185A (378 aa).

This Mus musculus (Mouse) protein is Protein FAM185A (Fam185a).